Reading from the N-terminus, the 200-residue chain is Imidazoleglycerol-phosphate dehydratase (200 aa).

The protein belongs to the imidazoleglycerol-phosphate dehydratase family.

It localises to the cytoplasm. The enzyme catalyses D-erythro-1-(imidazol-4-yl)glycerol 3-phosphate = 3-(imidazol-4-yl)-2-oxopropyl phosphate + H2O. Its pathway is amino-acid biosynthesis; L-histidine biosynthesis; L-histidine from 5-phospho-alpha-D-ribose 1-diphosphate: step 6/9. The protein is Imidazoleglycerol-phosphate dehydratase of Chlorobium phaeobacteroides (strain DSM 266 / SMG 266 / 2430).